We begin with the raw amino-acid sequence, 612 residues long: Zinc metalloproteinase-disintegrin-like 2a (612 aa).

Residues 1–20 (MIQVLLVTICLAVFPYQGSS) form the signal peptide. The propeptide occupies 21-189 (IILGSGNVND…KKASQLNLTP (169 aa)). The Peptidase M12B domain maps to 199–395 (KYIELVIVAD…NRPPCILNKP (197 aa)). Ca(2+) is bound at residue E202. Residue N218 is glycosylated (N-linked (GlcNAc...) asparagine). Residue D286 participates in Ca(2+) binding. Intrachain disulfides connect C310-C390, C350-C374, and C352-C357. H335 contributes to the Zn(2+) binding site. E336 is a catalytic residue. Residues H339 and H345 each contribute to the Zn(2+) site. Residues C390, N393, V405, N408, F410, E412, E415, and D418 each contribute to the Ca(2+) site. The Disintegrin domain maps to 403–489 (PPVCGNYFVE…DCPTDNFQRN (87 aa)). Cystine bridges form between C406–C435, C417–C430, C419–C425, C429–C452, C443–C449, C448–C474, C461–C481, C468–C500, C493–C505, C512–C562, C527–C573, C540–C550, C557–C599, and C593–C605. The D/ECD-tripeptide signature appears at 467–469 (ECD).

It belongs to the venom metalloproteinase (M12B) family. P-III subfamily. The cofactor is Zn(2+). Expressed by the venom gland.

Its subcellular location is the secreted. Its function is as follows. Snake venom metalloproteinase that impairs hemostasis in the envenomed animal. The chain is Zinc metalloproteinase-disintegrin-like 2a from Crotalus adamanteus (Eastern diamondback rattlesnake).